The following is a 428-amino-acid chain: MDTEQDAKSEERQQWKLEKDTELRVEVAEGDREAIIVLLSGNAEVFGTELVKNKKFTFRPGSKLAIFTWQGCSVEIQGPLEVAYKSKETPMVMYLNLHMALEQMRERADKHEAVELGPRVMVVGPTDVGKSTVCQLLLNYAVRMGRRPISVDLDVGQGTASVPGSMGALLLERPADIEEGFSLQAPLVYLFGHTSPSPNEKLYNMLSSKIADIVFQRFERNKKACASGCVINTCGWVTGMGYRIIVHAATAFKVNVIVVLDQERLYNDLKNQFGDKVQIVHLPKSGGVVVRSRETRRKVRDERLRSYFYGQQANLYPHSFEVKFSDVKLFKIGAPLVPDSCLPLGMDQGQNETKLVPVVPTKDLKHCLLAISAAESLEEDLVQTNVIGFLVVNEVDLDREVMVVLSPAPRPLPRKFLLLSEIKFMDFK.

Residues E22, K63, and 127-132 each bind ATP; that span reads DVGKST.

Belongs to the Clp1 family. Clp1 subfamily.

It is found in the nucleus. Functionally, required for endonucleolytic cleavage during polyadenylation-dependent pre-mRNA 3'-end formation. The chain is Protein CLP1 homolog from Nematostella vectensis (Starlet sea anemone).